We begin with the raw amino-acid sequence, 581 residues long: Arginine--tRNA ligase (581 aa).

Residues 122 to 132 (PNVAKPMHVGH) carry the 'HIGH' region motif.

Belongs to the class-I aminoacyl-tRNA synthetase family. In terms of assembly, monomer.

It localises to the cytoplasm. The catalysed reaction is tRNA(Arg) + L-arginine + ATP = L-arginyl-tRNA(Arg) + AMP + diphosphate. The protein is Arginine--tRNA ligase of Francisella tularensis subsp. novicida (strain U112).